The sequence spans 59 residues: UPF0434 protein Shew_1640 (59 aa).

It belongs to the UPF0434 family.

This is UPF0434 protein Shew_1640 from Shewanella loihica (strain ATCC BAA-1088 / PV-4).